A 255-amino-acid polypeptide reads, in one-letter code: uncharacterized protein (255 aa).

Belongs to the methyltransferase superfamily.

This is an uncharacterized protein from Mycolicibacterium vanbaalenii (strain DSM 7251 / JCM 13017 / BCRC 16820 / KCTC 9966 / NRRL B-24157 / PYR-1) (Mycobacterium vanbaalenii).